Reading from the N-terminus, the 454-residue chain is Bifunctional protein GlmU (454 aa).

Residues 1–226 (MALNVVILAA…AIEVEGANNR (226 aa)) are pyrophosphorylase. UDP-N-acetyl-alpha-D-glucosamine is bound by residues 8–11 (LAAG), Lys-22, Gln-73, 78–79 (GT), 100–102 (YGD), Gly-137, Glu-151, Asn-166, and Asn-224. A Mg(2+)-binding site is contributed by Asp-102. Asn-224 contacts Mg(2+). Positions 227–247 (VQLAQLERAYQAREAEKLMLA) are linker. The tract at residues 248–454 (GANLRDPHRI…DWKRPVKIKK (207 aa)) is N-acetyltransferase. UDP-N-acetyl-alpha-D-glucosamine-binding residues include Arg-330 and Lys-348. The Proton acceptor role is filled by His-360. Residues Tyr-363 and Asn-374 each contribute to the UDP-N-acetyl-alpha-D-glucosamine site. Residues Ala-377, 383-384 (NY), Ser-402, Ala-420, and Arg-437 each bind acetyl-CoA.

In the N-terminal section; belongs to the N-acetylglucosamine-1-phosphate uridyltransferase family. The protein in the C-terminal section; belongs to the transferase hexapeptide repeat family. Homotrimer. The cofactor is Mg(2+).

It is found in the cytoplasm. The catalysed reaction is alpha-D-glucosamine 1-phosphate + acetyl-CoA = N-acetyl-alpha-D-glucosamine 1-phosphate + CoA + H(+). It carries out the reaction N-acetyl-alpha-D-glucosamine 1-phosphate + UTP + H(+) = UDP-N-acetyl-alpha-D-glucosamine + diphosphate. It participates in nucleotide-sugar biosynthesis; UDP-N-acetyl-alpha-D-glucosamine biosynthesis; N-acetyl-alpha-D-glucosamine 1-phosphate from alpha-D-glucosamine 6-phosphate (route II): step 2/2. The protein operates within nucleotide-sugar biosynthesis; UDP-N-acetyl-alpha-D-glucosamine biosynthesis; UDP-N-acetyl-alpha-D-glucosamine from N-acetyl-alpha-D-glucosamine 1-phosphate: step 1/1. Its pathway is bacterial outer membrane biogenesis; LPS lipid A biosynthesis. Catalyzes the last two sequential reactions in the de novo biosynthetic pathway for UDP-N-acetylglucosamine (UDP-GlcNAc). The C-terminal domain catalyzes the transfer of acetyl group from acetyl coenzyme A to glucosamine-1-phosphate (GlcN-1-P) to produce N-acetylglucosamine-1-phosphate (GlcNAc-1-P), which is converted into UDP-GlcNAc by the transfer of uridine 5-monophosphate (from uridine 5-triphosphate), a reaction catalyzed by the N-terminal domain. The protein is Bifunctional protein GlmU of Shewanella putrefaciens (strain CN-32 / ATCC BAA-453).